Here is a 182-residue protein sequence, read N- to C-terminus: Acireductone dioxygenase (182 aa).

Positions 100, 102, 106, and 145 each coordinate Fe(2+). Residues His-100, His-102, Glu-106, and His-145 each contribute to the Ni(2+) site.

This sequence belongs to the acireductone dioxygenase (ARD) family. Monomer. Requires Fe(2+) as cofactor. The cofactor is Ni(2+).

It carries out the reaction 1,2-dihydroxy-5-(methylsulfanyl)pent-1-en-3-one + O2 = 3-(methylsulfanyl)propanoate + CO + formate + 2 H(+). It catalyses the reaction 1,2-dihydroxy-5-(methylsulfanyl)pent-1-en-3-one + O2 = 4-methylsulfanyl-2-oxobutanoate + formate + 2 H(+). It participates in amino-acid biosynthesis; L-methionine biosynthesis via salvage pathway; L-methionine from S-methyl-5-thio-alpha-D-ribose 1-phosphate: step 5/6. In terms of biological role, catalyzes 2 different reactions between oxygen and the acireductone 1,2-dihydroxy-3-keto-5-methylthiopentene (DHK-MTPene) depending upon the metal bound in the active site. Fe-containing acireductone dioxygenase (Fe-ARD) produces formate and 2-keto-4-methylthiobutyrate (KMTB), the alpha-ketoacid precursor of methionine in the methionine recycle pathway. Ni-containing acireductone dioxygenase (Ni-ARD) produces methylthiopropionate, carbon monoxide and formate, and does not lie on the methionine recycle pathway. This chain is Acireductone dioxygenase, found in Nostoc sp. (strain PCC 7120 / SAG 25.82 / UTEX 2576).